Reading from the N-terminus, the 79-residue chain is uncharacterized protein (79 aa).

It localises to the mitochondrion. This is an uncharacterized protein from Marchantia polymorpha (Common liverwort).